The chain runs to 293 residues: Homoserine kinase (293 aa).

83–93 is an ATP binding site; the sequence is RPKSGLGSSGA.

Belongs to the GHMP kinase family. Homoserine kinase subfamily.

The protein resides in the cytoplasm. The enzyme catalyses L-homoserine + ATP = O-phospho-L-homoserine + ADP + H(+). Its pathway is amino-acid biosynthesis; L-threonine biosynthesis; L-threonine from L-aspartate: step 4/5. Functionally, catalyzes the ATP-dependent phosphorylation of L-homoserine to L-homoserine phosphate. The chain is Homoserine kinase from Pyrococcus horikoshii (strain ATCC 700860 / DSM 12428 / JCM 9974 / NBRC 100139 / OT-3).